The sequence spans 228 residues: Protein Thf1 (228 aa).

The stretch at 201 to 223 (IKRSKEVVDELSQTERRKREERA) forms a coiled coil. The tract at residues 209–228 (DELSQTERRKREERAVSQPG) is disordered.

Belongs to the THF1 family.

In terms of biological role, may be involved in photosynthetic membrane biogenesis. In Gloeobacter violaceus (strain ATCC 29082 / PCC 7421), this protein is Protein Thf1.